Here is a 404-residue protein sequence, read N- to C-terminus: Argininosuccinate synthase (404 aa).

Residues 11–19 (AYSGGLDTS) and Ala38 each bind ATP. The L-citrulline site is built by Tyr91 and Ser96. Gly121 provides a ligand contact to ATP. L-aspartate-binding residues include Thr123, Asn127, and Asp128. Asn127 serves as a coordination point for L-citrulline. L-citrulline is bound by residues Arg131, Ser182, Ser191, Glu267, and Tyr279.

Belongs to the argininosuccinate synthase family. Type 1 subfamily. In terms of assembly, homotetramer.

It is found in the cytoplasm. The catalysed reaction is L-citrulline + L-aspartate + ATP = 2-(N(omega)-L-arginino)succinate + AMP + diphosphate + H(+). It participates in amino-acid biosynthesis; L-arginine biosynthesis; L-arginine from L-ornithine and carbamoyl phosphate: step 2/3. This chain is Argininosuccinate synthase, found in Paramagnetospirillum magneticum (strain ATCC 700264 / AMB-1) (Magnetospirillum magneticum).